Reading from the N-terminus, the 427-residue chain is Delta(14)-sterol reductase (427 aa).

Residues 1-25 lie on the Cytoplasmic side of the membrane; sequence MSEQESRDNAAVDAVRQKYGFGFSW. A helical transmembrane segment spans residues 26 to 46; it reads LVLMIALPPLVYYLWICVTYY. The Periplasmic portion of the chain corresponds to 47-70; that stretch reads QGELVFTSDAAAWRRFWSHVAPPT. A helical transmembrane segment spans residues 71-91; the sequence is WHAAGLYAAWFLGQAALQVWA. Topologically, residues 92-110 are cytoplasmic; it reads PGPTVQGMKLPDGSRLDYR. A helical transmembrane segment spans residues 111–131; it reads MNGIFSFLFTLAVVFGLVTMG. Over 132–141 the chain is Periplasmic; that stretch reads WLDATVLYDQ. Residues 142–162 form a helical membrane-spanning segment; sequence LGPLLTVVNIFTFVFAGFLYF. Residues 163 to 197 are Cytoplasmic-facing; sequence WGLNGKQWERPTGRPFYDYFMGTALNPRIGSLDLK. A helical transmembrane segment spans residues 198–218; it reads LFCEARPGMIFWLLMNLSMAA. Over 219–226 the chain is Periplasmic; that stretch reads KQYELHGT. The helical transmembrane segment at 227–247 threads the bilayer; the sequence is VTVPMLLVVGFQSFYLIDYFI. Topologically, residues 248–262 are cytoplasmic; that stretch reads HEEAVLTTWDIKHEK. The chain crosses the membrane as a helical span at residues 263-283; that stretch reads FGWMLCWGDLVWLPFTYTLQA. Residues 284-291 lie on the Periplasmic side of the membrane; that stretch reads QYLVHHTH. A helical transmembrane segment spans residues 292–312; that stretch reads DLPVWGIIAIVALNLAGYAIF. The Cytoplasmic segment spans residues 313-356; sequence RGANIQKHHFRRDPNRIVWGKPAKYIKTKQGSLLLTSGWWGIAR. NADP(+)-binding positions include Lys319, Arg323, Leu347, Trp352, and 359-360; that span reads NY. A helical transmembrane segment spans residues 357–377; that stretch reads HMNYFGDLMIALSWCLPAAFG. Ser378 is a topological domain (periplasmic). The chain crosses the membrane as a helical span at residues 379-399; the sequence is PIPYFHIVYFTILLLHREKRD. NADP(+) contacts are provided by residues Asp399, 403-407, and Tyr414; that span reads CLAKY. Residues 400-427 lie on the Cytoplasmic side of the membrane; that stretch reads DAMCLAKYGEDWLQYRKKVPWRIVPKIY.

The protein belongs to the ERG4/ERG24 family.

The protein resides in the cell inner membrane. It carries out the reaction 4,4-dimethyl-5alpha-cholesta-8,24-dien-3beta-ol + NADP(+) = 4,4-dimethyl-5alpha-cholesta-8,14,24-trien-3beta-ol + NADPH + H(+). The protein operates within steroid biosynthesis; zymosterol biosynthesis; zymosterol from lanosterol. In terms of biological role, reduces the C14=C15 double bond of 4,4-dimethyl-cholesta-8,14,24-trienol to produce 4,4-dimethyl-cholesta-8,24-dienol. Complements the deletion of the Delta(14)-sterol reductase gene ERG24 in yeast. This chain is Delta(14)-sterol reductase, found in Methylotuvimicrobium alcaliphilum (strain DSM 19304 / NCIMB 14124 / VKM B-2133 / 20Z) (Methylomicrobium alcaliphilum).